The sequence spans 922 residues: Probable dipeptidyl-aminopeptidase B (922 aa).

Over residues 1-16 (MATEKGHSRDDEERVP) the composition is skewed to basic and acidic residues. A disordered region spans residues 1–21 (MATEKGHSRDDEERVPLTRGS). The Cytoplasmic segment spans residues 1–99 (MATEKGHSRD…KPMHKSVKIA (99 aa)). A helical; Signal-anchor for type II membrane protein transmembrane segment spans residues 100 to 120 (LWSLLFLSLGGWSLAFVLFIF). Residues 121–922 (RSHDTYQTPI…AGLYKFKHLC (802 aa)) are Vacuolar-facing. N-linked (GlcNAc...) asparagine glycosylation is found at Asn135, Asn200, Asn351, and Asn574. Catalysis depends on Ser756, which acts as the Charge relay system. N-linked (GlcNAc...) asparagine glycosylation occurs at Asn815. Catalysis depends on charge relay system residues Asp833 and His866. An N-linked (GlcNAc...) asparagine glycan is attached at Asn902.

It belongs to the peptidase S9B family.

It is found in the vacuole membrane. The catalysed reaction is Release of an N-terminal dipeptide, Xaa-Yaa-|-Zaa-, from a polypeptide, preferentially when Yaa is Pro, provided Zaa is neither Pro nor hydroxyproline.. Type IV dipeptidyl-peptidase which removes N-terminal dipeptides sequentially from polypeptides having unsubstituted N-termini provided that the penultimate residue is proline. This chain is Probable dipeptidyl-aminopeptidase B (DAPB), found in Ajellomyces capsulatus (strain NAm1 / WU24) (Darling's disease fungus).